We begin with the raw amino-acid sequence, 416 residues long: Phosphoglycerate kinase (416 aa).

The (2R)-3-phosphoglycerate site is built by V23, D24, F25, N26, R39, S62, H63, G65, R66, L121, R122, H169, and R170. Residue G213 participates in ADP binding. G213 contributes to the CDP binding site. AMP-binding residues include A214 and K215. An ATP-binding site is contributed by A214. A Mg(2+)-binding site is contributed by A214. D218 contacts CDP. D218 contributes to the Mg(2+) binding site. AMP is bound at residue K219. K219 lines the ATP pocket. G237 is a binding site for ADP. G237 is a CDP binding site. Positions 238 and 312 each coordinate AMP. Residues G238 and G312 each contribute to the ATP site. G337 and F342 together coordinate CDP. F342 serves as a coordination point for ADP. Position 343 (E343) interacts with AMP. The ATP site is built by E343, D374, and T375. A Mg(2+)-binding site is contributed by D374.

The protein belongs to the phosphoglycerate kinase family. In terms of assembly, monomer. Requires Mg(2+) as cofactor.

It is found in the cytoplasm. The protein localises to the mitochondrion. The catalysed reaction is (2R)-3-phosphoglycerate + ATP = (2R)-3-phospho-glyceroyl phosphate + ADP. The protein operates within carbohydrate degradation; glycolysis; pyruvate from D-glyceraldehyde 3-phosphate: step 2/5. Its function is as follows. Catalyzes one of the two ATP producing reactions in the glycolytic pathway via the reversible conversion of 1,3-diphosphoglycerate to 3-phosphoglycerate. Both L- and D- forms of purine and pyrimidine nucleotides can be used as substrates, but the activity is much lower on pyrimidines. Negatively regulates the biosynthesis of acetyl-CoA from pyruvate in the mitochondrion. In Agaricus bisporus (White button mushroom), this protein is Phosphoglycerate kinase (pgkA).